The sequence spans 75 residues: Transcription attenuation protein MtrB (75 aa).

The protein belongs to the MtrB family. Oligomer of 11 identical subunits arranged in doughnut-like structure.

Functionally, required for transcription attenuation control in the trp operon. This trans-acting factor binds to trinucleotide repeats (GAG or UAG) located in the trp leader transcript causing transcription termination. Binds the leader RNA only in presence of L-tryptophan. This Bacillus subtilis (strain 168) protein is Transcription attenuation protein MtrB (mtrB).